The primary structure comprises 491 residues: MNTQQLAKLRSIVPEMRRVRHIHFVGIGGAGMGGIAEVLANEGYQISGSDLAPNPVTQQLLNLGATIYFNHRPENVRDASVVVVSSAISADNPEIVAAHEARIPVIRRAEMLAELMRFRHGIAIAGTHGKTTTTAMVSSIYAEAGLDPTFVNGGLVKAAGVHARLGHGRYLIAEADESDASFLHLQPMVAIVTNIEADHMDTYQGDFENLKQTFINFLHNLPFYGRAVMCVDDPVIRELLPRVGRQTTTYGFSEDADVRVEDYQQIGPQGHFTLLRQDKEPMCVTLNAPGRHNALNAAAAVAVATEEGIDDEAILRALESFQGTGRRFDFLGEFPLEPVNGKSGTAMLVDDYGHHPTEVDATIKAARAGWPDKNLVMLFQPHRFTRTRDLYDDFANVLTQVDTLLMLEVYPAGEAPIPGADSRSLCRTIRGRGKIDPILVPDPAQVAEMLAPVLTGNDLILVQGAGNIGKIARSLAEIKLKPQTPEEEQHD.

126–132 (GTHGKTT) serves as a coordination point for ATP.

The protein belongs to the MurCDEF family.

The protein resides in the cytoplasm. It catalyses the reaction UDP-N-acetyl-alpha-D-muramate + L-alanine + ATP = UDP-N-acetyl-alpha-D-muramoyl-L-alanine + ADP + phosphate + H(+). It functions in the pathway cell wall biogenesis; peptidoglycan biosynthesis. Its function is as follows. Cell wall formation. This is UDP-N-acetylmuramate--L-alanine ligase from Shigella flexneri.